A 152-amino-acid chain; its full sequence is Ribosome maturation factor RimP (152 aa).

It belongs to the RimP family.

The protein localises to the cytoplasm. Required for maturation of 30S ribosomal subunits. This Idiomarina loihiensis (strain ATCC BAA-735 / DSM 15497 / L2-TR) protein is Ribosome maturation factor RimP.